We begin with the raw amino-acid sequence, 329 residues long: Adenylate isopentenyltransferase (329 aa).

ATP contacts are provided by residues Gly37 to Ser44, Lys63, Thr74, Ser129 to Ser131, Lys220 to Ile222, and Lys313.

It belongs to the IPP transferase family. It depends on Mg(2+) as a cofactor. Expressed in roots, stems, leaves and cones.

It catalyses the reaction dimethylallyl diphosphate + AMP = N(6)-(dimethylallyl)adenosine 5'-phosphate + diphosphate. The catalysed reaction is dimethylallyl diphosphate + ADP = N(6)-(dimethylallyl)adenosine 5'-diphosphate + diphosphate. It carries out the reaction dimethylallyl diphosphate + ATP = N(6)-(dimethylallyl)adenosine 5'-triphosphate + diphosphate. In terms of biological role, involved in cytokinin biosynthesis. Catalyzes the transfer of an isopentenyl group from dimethylallyl diphosphate (DMAPP) to ATP, ADP and AMP. GMP, IMP, CMP or UMP are not used as substrates. In Humulus lupulus (European hop), this protein is Adenylate isopentenyltransferase.